A 217-amino-acid polypeptide reads, in one-letter code: Orotidine 5'-phosphate decarboxylase (217 aa).

Substrate-binding positions include aspartate 14, lysine 36, 64 to 73 (DFKVADIPST), serine 120, 172 to 182 (PGVGAQGGNLS), glycine 197, and arginine 198. Lysine 66 (proton donor) is an active-site residue.

This sequence belongs to the OMP decarboxylase family. Type 1 subfamily. Homodimer.

The catalysed reaction is orotidine 5'-phosphate + H(+) = UMP + CO2. The protein operates within pyrimidine metabolism; UMP biosynthesis via de novo pathway; UMP from orotate: step 2/2. Its function is as follows. Catalyzes the decarboxylation of orotidine 5'-monophosphate (OMP) to uridine 5'-monophosphate (UMP). This Methanococcus maripaludis (strain C6 / ATCC BAA-1332) protein is Orotidine 5'-phosphate decarboxylase.